Reading from the N-terminus, the 432-residue chain is Histidine--tRNA ligase (432 aa).

Belongs to the class-II aminoacyl-tRNA synthetase family.

Its subcellular location is the cytoplasm. It catalyses the reaction tRNA(His) + L-histidine + ATP = L-histidyl-tRNA(His) + AMP + diphosphate + H(+). The polypeptide is Histidine--tRNA ligase (Halobacterium salinarum (strain ATCC 29341 / DSM 671 / R1)).